The primary structure comprises 138 residues: Large ribosomal subunit protein uL16 (138 aa).

It belongs to the universal ribosomal protein uL16 family. As to quaternary structure, part of the 50S ribosomal subunit.

Binds 23S rRNA and is also seen to make contacts with the A and possibly P site tRNAs. The sequence is that of Large ribosomal subunit protein uL16 from Anaeromyxobacter sp. (strain Fw109-5).